The sequence spans 121 residues: MARVKRGVTTHARHKKILNLAKGYRGRAKSCYRIALQRVEKALQYAYRDRRNRKRDFRSLWIIRINAAAREHGLTYGRFMHGLALAGVDLNRKILAEMAVNYKDDFTKLAETVSSKLAENS.

The protein belongs to the bacterial ribosomal protein bL20 family.

Functionally, binds directly to 23S ribosomal RNA and is necessary for the in vitro assembly process of the 50S ribosomal subunit. It is not involved in the protein synthesizing functions of that subunit. The chain is Large ribosomal subunit protein bL20 from Wolbachia sp. subsp. Brugia malayi (strain TRS).